The primary structure comprises 401 residues: 2-amino-3-carboxymuconate-6-semialdehyde decarboxylase (401 aa).

Zn(2+) is bound by residues H18 and H20. Residue R59 participates in substrate binding. 2 residues coordinate Zn(2+): H234 and D352.

It belongs to the metallo-dependent hydrolases superfamily. ACMSD family. In terms of assembly, monomer.

It carries out the reaction 2-amino-3-carboxymuconate 6-semialdehyde + H(+) = 2-aminomuconate 6-semialdehyde + CO2. Its pathway is secondary metabolite metabolism; quinolate metabolism. Functionally, converts alpha-amino-beta-carboxymuconate-epsilon-semialdehyde (ACMS) to alpha-aminomuconate semialdehyde (AMS). In Caenorhabditis elegans, this protein is 2-amino-3-carboxymuconate-6-semialdehyde decarboxylase.